We begin with the raw amino-acid sequence, 322 residues long: D-specific alpha-keto acid dehydrogenase (322 aa).

Residues 156 to 157, 229 to 231, and Asp255 contribute to the NAD(+) site; these read QI and TGR. Residue Arg231 is part of the active site. Glu260 is an active-site residue. The active-site Proton donor is the His292. Residue 292 to 295 participates in NAD(+) binding; it reads HTAY.

This sequence belongs to the D-isomer specific 2-hydroxyacid dehydrogenase family.

It carries out the reaction a (2R)-2-hydroxycarboxylate + NADP(+) = a 2-oxocarboxylate + NADPH + H(+). The catalysed reaction is a (2R)-2-hydroxycarboxylate + NAD(+) = a 2-oxocarboxylate + NADH + H(+). The enzyme catalyses (R)-lactate + NADP(+) = pyruvate + NADPH + H(+). It catalyses the reaction (R)-lactate + NAD(+) = pyruvate + NADH + H(+). It carries out the reaction (2R)-hydroxybutanoate + NADP(+) = 2-oxobutanoate + NADPH + H(+). Its function is as follows. Required for high-level resistance to glycopeptide antibiotics. Catalyzes the reduction of 2-keto acids to 2-D-hydroxy acids, exhibiting highest catalytic efficiency with pyruvate and 2-oxobutanoate/alpha-ketobutyrate as substrates, producing D-lactate and (2R)-hydroxybutanoate, respectively. Together with D-alanine--D-lactate ligase VanA, gives rise to peptidoglycan precursors that terminate in the depsipeptide D-alanine-D-lactate rather than the dipeptide D-alanine-D-alanine thus preventing vancomycin binding. Shows a slight preference for NADPH over NADH as the electron donor. The sequence is that of D-specific alpha-keto acid dehydrogenase from Enterococcus faecium (Streptococcus faecium).